Consider the following 624-residue polypeptide: Acidic juvenile hormone-suppressible protein 1 (624 aa).

The signal sequence occupies residues 1–18; the sequence is MARLVLCALALLVAGGLA. 2 N-linked (GlcNAc...) asparagine glycosylation sites follow: N75 and N478.

This sequence belongs to the hemocyanin family.

Its subcellular location is the secreted. It is found in the extracellular space. This Trichoplusia ni (Cabbage looper) protein is Acidic juvenile hormone-suppressible protein 1 (AJSP-1).